The following is a 530-amino-acid chain: ATP synthase subunit alpha (530 aa).

Position 172–179 (172–179) interacts with ATP; the sequence is GDRQTGKT.

It belongs to the ATPase alpha/beta chains family. In terms of assembly, F-type ATPases have 2 components, CF(1) - the catalytic core - and CF(0) - the membrane proton channel. CF(1) has five subunits: alpha(3), beta(3), gamma(1), delta(1), epsilon(1). CF(0) has three main subunits: a(1), b(2) and c(9-12). The alpha and beta chains form an alternating ring which encloses part of the gamma chain. CF(1) is attached to CF(0) by a central stalk formed by the gamma and epsilon chains, while a peripheral stalk is formed by the delta and b chains.

It is found in the cell inner membrane. The catalysed reaction is ATP + H2O + 4 H(+)(in) = ADP + phosphate + 5 H(+)(out). Its function is as follows. Produces ATP from ADP in the presence of a proton gradient across the membrane. The alpha chain is a regulatory subunit. This Phocaeicola vulgatus (strain ATCC 8482 / DSM 1447 / JCM 5826 / CCUG 4940 / NBRC 14291 / NCTC 11154) (Bacteroides vulgatus) protein is ATP synthase subunit alpha.